Reading from the N-terminus, the 162-residue chain is NADH-quinone oxidoreductase subunit I (162 aa).

2 consecutive 4Fe-4S ferredoxin-type domains span residues Q53–E83 and S93–I122. [4Fe-4S] cluster is bound by residues C63, C66, C69, C73, C102, C105, C108, and C112.

Belongs to the complex I 23 kDa subunit family. NDH-1 is composed of 14 different subunits. Subunits NuoA, H, J, K, L, M, N constitute the membrane sector of the complex. [4Fe-4S] cluster serves as cofactor.

It localises to the cell inner membrane. The catalysed reaction is a quinone + NADH + 5 H(+)(in) = a quinol + NAD(+) + 4 H(+)(out). Its function is as follows. NDH-1 shuttles electrons from NADH, via FMN and iron-sulfur (Fe-S) centers, to quinones in the respiratory chain. The immediate electron acceptor for the enzyme in this species is believed to be ubiquinone. Couples the redox reaction to proton translocation (for every two electrons transferred, four hydrogen ions are translocated across the cytoplasmic membrane), and thus conserves the redox energy in a proton gradient. In Chromobacterium violaceum (strain ATCC 12472 / DSM 30191 / JCM 1249 / CCUG 213 / NBRC 12614 / NCIMB 9131 / NCTC 9757 / MK), this protein is NADH-quinone oxidoreductase subunit I.